The sequence spans 862 residues: DNA mismatch repair protein MutS (862 aa).

Residue 613-620 (GPNMAGKS) coordinates ATP.

It belongs to the DNA mismatch repair MutS family.

This protein is involved in the repair of mismatches in DNA. It is possible that it carries out the mismatch recognition step. This protein has a weak ATPase activity. The sequence is that of DNA mismatch repair protein MutS from Desulfitobacterium hafniense (strain Y51).